Consider the following 217-residue polypeptide: Uracil-DNA glycosylase (217 aa).

Catalysis depends on D62, which acts as the Proton acceptor.

It belongs to the uracil-DNA glycosylase (UDG) superfamily. UNG family.

The protein localises to the cytoplasm. It catalyses the reaction Hydrolyzes single-stranded DNA or mismatched double-stranded DNA and polynucleotides, releasing free uracil.. Functionally, excises uracil residues from the DNA which can arise as a result of misincorporation of dUMP residues by DNA polymerase or due to deamination of cytosine. This is Uracil-DNA glycosylase from Streptococcus sanguinis (strain SK36).